Reading from the N-terminus, the 317-residue chain is MNKELVILKISGASLKGKNDIIDLDFLREIGRQIKVLSNNYKVAIVLGGGNIWRGNIAKEIGMQRYKADQMGMLATVMNSLALQSLLTNINVKSRIFSTIEMEKIADSYIIRNLEESLNNNEIAILSCGTGRPYFTTDTGVAVSAAELGASYIMMGKNNVDGVYDSDPNKNPNAKFYKHLTYSKAIELGLEVMDITAATICKQSNIKTIVFKMNEKNGILNAFENKSKFTLVSEDEKDLDAFKFGIKNIKNNSEKSSNNWDNKVIDIKTIKEENSLNIDDIFENSIEELQKLKEDDIQKNQKKLNEIIKSFYQDNKE.

ATP is bound at residue 9–12 (KISG). Glycine 49 is a binding site for UMP. ATP contacts are provided by glycine 50 and arginine 54. Residues aspartate 69 and 130–137 (TGRPYFTT) each bind UMP. ATP is bound by residues asparagine 158, tyrosine 164, and aspartate 167.

Belongs to the UMP kinase family. In terms of assembly, homohexamer.

Its subcellular location is the cytoplasm. It catalyses the reaction UMP + ATP = UDP + ADP. It functions in the pathway pyrimidine metabolism; CTP biosynthesis via de novo pathway; UDP from UMP (UMPK route): step 1/1. Inhibited by UTP. Its function is as follows. Catalyzes the reversible phosphorylation of UMP to UDP. In Malacoplasma penetrans (strain HF-2) (Mycoplasma penetrans), this protein is Uridylate kinase.